The primary structure comprises 209 residues: Nucleoside triphosphate pyrophosphatase (209 aa).

Asp79 functions as the Proton acceptor in the catalytic mechanism.

Belongs to the Maf family. The cofactor is a divalent metal cation.

Its subcellular location is the cytoplasm. It catalyses the reaction a ribonucleoside 5'-triphosphate + H2O = a ribonucleoside 5'-phosphate + diphosphate + H(+). It carries out the reaction a 2'-deoxyribonucleoside 5'-triphosphate + H2O = a 2'-deoxyribonucleoside 5'-phosphate + diphosphate + H(+). Its function is as follows. Nucleoside triphosphate pyrophosphatase. May have a dual role in cell division arrest and in preventing the incorporation of modified nucleotides into cellular nucleic acids. The sequence is that of Nucleoside triphosphate pyrophosphatase from Mycolicibacterium gilvum (strain PYR-GCK) (Mycobacterium gilvum (strain PYR-GCK)).